Consider the following 300-residue polypeptide: Ribosomal protein L11 methyltransferase (300 aa).

4 residues coordinate S-adenosyl-L-methionine: Thr-152, Gly-173, Asp-195, and Asn-234.

Belongs to the methyltransferase superfamily. PrmA family.

The protein resides in the cytoplasm. It catalyses the reaction L-lysyl-[protein] + 3 S-adenosyl-L-methionine = N(6),N(6),N(6)-trimethyl-L-lysyl-[protein] + 3 S-adenosyl-L-homocysteine + 3 H(+). Methylates ribosomal protein L11. The polypeptide is Ribosomal protein L11 methyltransferase (Burkholderia pseudomallei (strain 1710b)).